A 157-amino-acid chain; its full sequence is MAKKQQTRSYTEAIQNRKARYEYQILETIVAGIELLGSEVKSVRLGKASLNESFATIHHDEVWLENMQITPYEFNHLDALEPKRSRKLLLHKEEIRRLQSKINEKGLTLIPLKAFFDKNGRLKVELALAKGKKLYDKRETIKGRENERHLQQLRKQY.

This sequence belongs to the SmpB family.

The protein resides in the cytoplasm. Its function is as follows. Required for rescue of stalled ribosomes mediated by trans-translation. Binds to transfer-messenger RNA (tmRNA), required for stable association of tmRNA with ribosomes. tmRNA and SmpB together mimic tRNA shape, replacing the anticodon stem-loop with SmpB. tmRNA is encoded by the ssrA gene; the 2 termini fold to resemble tRNA(Ala) and it encodes a 'tag peptide', a short internal open reading frame. During trans-translation Ala-aminoacylated tmRNA acts like a tRNA, entering the A-site of stalled ribosomes, displacing the stalled mRNA. The ribosome then switches to translate the ORF on the tmRNA; the nascent peptide is terminated with the 'tag peptide' encoded by the tmRNA and targeted for degradation. The ribosome is freed to recommence translation, which seems to be the essential function of trans-translation. In Chlorobium luteolum (strain DSM 273 / BCRC 81028 / 2530) (Pelodictyon luteolum), this protein is SsrA-binding protein.